A 410-amino-acid chain; its full sequence is Solute carrier family 52, riboflavin transporter, member 3 (410 aa).

The next 3 helical transmembrane spans lie at 3 to 23 (ILIYALACAFGLGSWLAINGL), 40 to 60 (LPSYLTVIIQLANLGPLLVTL), and 73 to 93 (VVIYTILCIGVLACFLLAFFL). Asparagine 157 carries an N-linked (GlcNAc...) asparagine glycan. Transmembrane regions (helical) follow at residues 158 to 178 (FTTEVFFFFLAVMMCISLAAF), 239 to 259 (FQLTFIYLMVVWVNGTTNGLL), 277 to 297 (LSAALASVANPVACIVAMFFP), 301 to 321 (LVFLGLLCVMGTGFASYNMAM), 334 to 354 (ALGEAIIVLSWVFFTGSLSYV), and 369 to 389 (ALVWCGAAAQIGSLIGSVIMF).

Belongs to the riboflavin transporter family.

The protein localises to the cell membrane. The enzyme catalyses riboflavin(in) = riboflavin(out). Functionally, plasma membrane transporter mediating the uptake by cells of the water soluble vitamin B2/riboflavin that plays a key role in biochemical oxidation-reduction reactions of the carbohydrate, lipid, and amino acid metabolism. The sequence is that of Solute carrier family 52, riboflavin transporter, member 3 (slc52a3) from Osmerus mordax (Rainbow smelt).